The sequence spans 1823 residues: WD repeat-containing protein DDB_G0292056 (1823 aa).

The disordered stretch occupies residues 1–68 (MTYNNNNNYL…IGNSSGGGGV (68 aa)). Residues 16–61 (TSTSTSTSTSTPTSTKTSPLNTSSSSNILKSNSRNPSPNNPTNIGN) show a composition bias toward low complexity. WD repeat units follow at residues 138–177 (QSKW…YPLL), 182–222 (SHQR…KAVK), 228–267 (SHIL…QELN), 270–310 (VHSA…PKST), 312–354 (ITSN…YSTP), and 360–405 (GHTD…KDLF). 9 disordered regions span residues 418 to 461 (PTTT…LLST), 530 to 562 (QPDD…NNNN), 649 to 687 (NITE…GFLK), 714 to 778 (IDIS…YRPG), 805 to 840 (ILTN…TNDQ), 883 to 940 (IPNN…SSTS), 966 to 996 (SSSS…NPPR), 1014 to 1058 (NNIT…NDNP), and 1122 to 1186 (QQLV…NGKS). Low complexity-rich tracts occupy residues 419-432 (TTTT…TTTT) and 440-461 (LNES…LLST). Composition is skewed to low complexity over residues 654–680 (NNNN…NNNN) and 717–748 (SQQQ…QQQQ). Composition is skewed to polar residues over residues 749 to 768 (FLTA…SPTS) and 827 to 840 (MNAS…TNDQ). Low complexity-rich tracts occupy residues 885–926 (NNNK…SSNN), 966–993 (SSSS…KNIN), 1014–1041 (NNIT…NRLN), and 1127–1183 (SSSP…NNGN). The WD 7 repeat unit spans residues 1207 to 1250 (ANSYILSGKPVEEICKYNSELAEKENRKDLVKLWNTLGMITDSK). 3 disordered regions span residues 1264–1307 (SHFG…LHQS), 1697–1725 (QQQP…HTHN), and 1764–1823 (PQQE…MFSN). The segment covering 1282-1293 (STGIASSTGSNS) has biased composition (low complexity). Residues 1710–1725 (MSGTSHYHQQQPHTHN) show a composition bias toward polar residues.

This is WD repeat-containing protein DDB_G0292056 from Dictyostelium discoideum (Social amoeba).